The following is a 576-amino-acid chain: Sulfite reductase [NADPH] hemoprotein beta-component (576 aa).

Positions 435, 441, 480, and 484 each coordinate [4Fe-4S] cluster. Cys-484 serves as a coordination point for siroheme.

This sequence belongs to the nitrite and sulfite reductase 4Fe-4S domain family. As to quaternary structure, alpha(8)-beta(8). The alpha component is a flavoprotein, the beta component is a hemoprotein. Siroheme serves as cofactor. It depends on [4Fe-4S] cluster as a cofactor.

The enzyme catalyses hydrogen sulfide + 3 NADP(+) + 3 H2O = sulfite + 3 NADPH + 4 H(+). It participates in sulfur metabolism; hydrogen sulfide biosynthesis; hydrogen sulfide from sulfite (NADPH route): step 1/1. Functionally, component of the sulfite reductase complex that catalyzes the 6-electron reduction of sulfite to sulfide. This is one of several activities required for the biosynthesis of L-cysteine from sulfate. This Proteus mirabilis (strain HI4320) protein is Sulfite reductase [NADPH] hemoprotein beta-component.